Reading from the N-terminus, the 89-residue chain is Small ribosomal subunit protein uS15 (89 aa).

It belongs to the universal ribosomal protein uS15 family. In terms of assembly, part of the 30S ribosomal subunit. Forms a bridge to the 50S subunit in the 70S ribosome, contacting the 23S rRNA.

One of the primary rRNA binding proteins, it binds directly to 16S rRNA where it helps nucleate assembly of the platform of the 30S subunit by binding and bridging several RNA helices of the 16S rRNA. Functionally, forms an intersubunit bridge (bridge B4) with the 23S rRNA of the 50S subunit in the ribosome. This Sulfurovum sp. (strain NBC37-1) protein is Small ribosomal subunit protein uS15.